We begin with the raw amino-acid sequence, 473 residues long: Argininosuccinate lyase (473 aa).

The protein belongs to the lyase 1 family. Argininosuccinate lyase subfamily.

The protein resides in the cytoplasm. The enzyme catalyses 2-(N(omega)-L-arginino)succinate = fumarate + L-arginine. It functions in the pathway amino-acid biosynthesis; L-arginine biosynthesis; L-arginine from L-ornithine and carbamoyl phosphate: step 3/3. The chain is Argininosuccinate lyase from Bordetella pertussis (strain Tohama I / ATCC BAA-589 / NCTC 13251).